Reading from the N-terminus, the 132-residue chain is Large ribosomal subunit protein bL12 (132 aa).

Belongs to the bacterial ribosomal protein bL12 family. Homodimer. Part of the ribosomal stalk of the 50S ribosomal subunit. Forms a multimeric L10(L12)X complex, where L10 forms an elongated spine to which 2 to 4 L12 dimers bind in a sequential fashion. Binds GTP-bound translation factors.

In terms of biological role, forms part of the ribosomal stalk which helps the ribosome interact with GTP-bound translation factors. Is thus essential for accurate translation. The sequence is that of Large ribosomal subunit protein bL12 from Chloroflexus aurantiacus (strain ATCC 29366 / DSM 635 / J-10-fl).